Reading from the N-terminus, the 234-residue chain is Ubiquinone biosynthesis O-methyltransferase (234 aa).

S-adenosyl-L-methionine contacts are provided by arginine 36, glycine 56, aspartate 77, and methionine 125.

Belongs to the methyltransferase superfamily. UbiG/COQ3 family.

It catalyses the reaction a 3-demethylubiquinol + S-adenosyl-L-methionine = a ubiquinol + S-adenosyl-L-homocysteine + H(+). The catalysed reaction is a 3-(all-trans-polyprenyl)benzene-1,2-diol + S-adenosyl-L-methionine = a 2-methoxy-6-(all-trans-polyprenyl)phenol + S-adenosyl-L-homocysteine + H(+). Its pathway is cofactor biosynthesis; ubiquinone biosynthesis. In terms of biological role, O-methyltransferase that catalyzes the 2 O-methylation steps in the ubiquinone biosynthetic pathway. This is Ubiquinone biosynthesis O-methyltransferase from Actinobacillus pleuropneumoniae serotype 7 (strain AP76).